A 73-amino-acid chain; its full sequence is Translational regulator CsrA (73 aa).

Belongs to the CsrA/RsmA family. Homodimer; the beta-strands of each monomer intercalate to form a hydrophobic core, while the alpha-helices form wings that extend away from the core.

The protein localises to the cytoplasm. In terms of biological role, a translational regulator that binds mRNA to regulate translation initiation and/or mRNA stability. Usually binds in the 5'-UTR at or near the Shine-Dalgarno sequence preventing ribosome-binding, thus repressing translation. Its main target seems to be the major flagellin gene, while its function is anatagonized by FliW. In Clostridium kluyveri (strain NBRC 12016), this protein is Translational regulator CsrA.